Reading from the N-terminus, the 127-residue chain is MEGQRCIALIAHDEKKDDMADFARHHQKVLASFRIVATGTTGGRVQEACPGLEVIRLKSGPLGGDQQIGAMIATGEVDMLIFFTDPLTAMPHDVDVKALTRLATVYDIPMALNRATAENLIDFNSAD.

An MGS-like domain is found at 1 to 127 (MEGQRCIALI…ENLIDFNSAD (127 aa)). Substrate-binding positions include His12, Lys16, 38–41 (TGTT), and 59–60 (SG). Residue Asp65 is the Proton donor/acceptor of the active site. His92 provides a ligand contact to substrate.

Belongs to the methylglyoxal synthase family.

It catalyses the reaction dihydroxyacetone phosphate = methylglyoxal + phosphate. Functionally, catalyzes the formation of methylglyoxal from dihydroxyacetone phosphate. The chain is Methylglyoxal synthase from Agrobacterium fabrum (strain C58 / ATCC 33970) (Agrobacterium tumefaciens (strain C58)).